The chain runs to 234 residues: Protein-toxin resistance protein KTD1 (234 aa).

The Cytoplasmic portion of the chain corresponds to 1 to 47; that stretch reads MQTPSENTDVKMDTLDEPSAHLIEENVALPEDTFSSHLSYVLYEIAH. A helical transmembrane segment spans residues 48-68; it reads CKPIMFMIIIIVSLISLIVLF. Residues 68–75 are required for resistance to killer toxin K28, a protein-toxin encoded by the M28 virus; it reads FHDNDGCT. Residues 69-76 lie on the Extracellular side of the membrane; that stretch reads HDNDGCTV. Residues 77–97 form a helical membrane-spanning segment; the sequence is ILVMSLIVASMALMVVAAFTF. The Cytoplasmic portion of the chain corresponds to 98–234; it reads GKAITEQEFM…RKQYPDADLP (137 aa). A required for resistance to killer toxin K28, a protein-toxin encoded by the M28 virus region spans residues 147–234; it reads FYSGKKCHEF…RKQYPDADLP (88 aa). The segment at 168 to 187 is disordered; the sequence is SHSDSSSNSAEDTQSPVSAG. Positions 177 to 187 are enriched in polar residues; that stretch reads AEDTQSPVSAG. Lys-217 is covalently cross-linked (Glycyl lysine isopeptide (Lys-Gly) (interchain with G-Cter in ubiquitin)).

This sequence belongs to the DUP/COS family.

It localises to the vacuole membrane. The protein localises to the golgi apparatus. The protein resides in the trans-Golgi network membrane. It is found in the endosome membrane. Confers resistance to killer toxin K28, a protein-toxin encoded by the M28 virus that uses S.cerevisiae as a host. Probably acts against K28 after endocytosis of the protein-toxin. The polypeptide is Protein-toxin resistance protein KTD1 (Saccharomyces cerevisiae (strain ATCC 204508 / S288c) (Baker's yeast)).